Reading from the N-terminus, the 324-residue chain is Mitochondrial oxaloacetate transport protein (324 aa).

3 Solcar repeats span residues 20 to 111, 126 to 218, and 227 to 312; these read ISKF…IRSS, QSVG…AKNI, and DGPA…TMKL. The next 6 membrane-spanning stretches (helical) occupy residues 26–46, 79–99, 132–152, 193–213, 233–253, and 284–305; these read FVAG…IELI, GIKG…GLNG, VFSG…LFLV, GIDA…PIYN, LTAS…WDVI, and LYKG…CLTF.

The protein belongs to the mitochondrial carrier (TC 2.A.29) family.

It localises to the mitochondrion inner membrane. It carries out the reaction a dicarboxylate(in) + sulfate(out) = a dicarboxylate(out) + sulfate(in). The enzyme catalyses (2S)-2-isopropylmalate(in) + sulfate(out) = (2S)-2-isopropylmalate(out) + sulfate(in). It catalyses the reaction (2R,3S)-3-isopropylmalate(in) + sulfate(out) = (2R,3S)-3-isopropylmalate(out) + sulfate(in). The catalysed reaction is malonate(in) + sulfate(out) = malonate(out) + sulfate(in). It carries out the reaction oxaloacetate(in) + sulfate(out) = oxaloacetate(out) + sulfate(in). The enzyme catalyses thiosulfate(in) + sulfate(out) = thiosulfate(out) + sulfate(in). With respect to regulation, inhibited by alpha-keto isocaproate, an intermediate of leucine biosynthesis pathway. Its function is as follows. Antiporter that exchanges dicarboxylates and sulfur oxoanions across the inner membrane of mitochondria. Exports alpha-isopropylmalate from mitochondrial matrix to the cytosol, where it serves as a precursor for leucine biosynthesis. This Saccharomyces cerevisiae (strain ATCC 204508 / S288c) (Baker's yeast) protein is Mitochondrial oxaloacetate transport protein (OAC1).